The chain runs to 305 residues: Glutaminase (305 aa).

7 residues coordinate substrate: S61, N113, E158, N165, Y189, Y241, and V259.

This sequence belongs to the glutaminase family. In terms of assembly, homotetramer.

It catalyses the reaction L-glutamine + H2O = L-glutamate + NH4(+). This chain is Glutaminase, found in Clostridium botulinum (strain Loch Maree / Type A3).